Here is a 127-residue protein sequence, read N- to C-terminus: Riboflavin kinase (127 aa).

10-15 contributes to the CDP binding site; sequence GLGEGR. 2 residues coordinate Mg(2+): Thr39 and Asn41. FMN-binding residues include Thr96 and Glu104. Residue 109–112 participates in CDP binding; sequence IQLR.

This sequence belongs to the archaeal riboflavin kinase family. It depends on Mg(2+) as a cofactor.

The catalysed reaction is riboflavin + CTP = CDP + FMN + H(+). It participates in cofactor biosynthesis; FMN biosynthesis; FMN from riboflavin (CTP route): step 1/1. Functionally, catalyzes the CTP-dependent phosphorylation of riboflavin (vitamin B2) to form flavin mononucleotide (FMN). This chain is Riboflavin kinase, found in Methanococcus maripaludis (strain C5 / ATCC BAA-1333).